We begin with the raw amino-acid sequence, 288 residues long: Protein shisa-2 (288 aa).

An N-terminal signal peptide occupies residues 1–23; that stretch reads MWLEGSPLAVLAAVSFLLSVLAA. Residues 24-110 are Extracellular-facing; sequence AQGSGEYCHG…DSTAVPIYVP (87 aa). The chain crosses the membrane as a helical span at residues 111 to 131; the sequence is FLIVGSVFVAFIIVGSLVAIC. Residues 132 to 288 are Cytoplasmic-facing; sequence CCRCLRPKQE…EQMMYPAVTV (157 aa). Residues 161 to 188 are compositionally biased toward low complexity; it reads SSASTSRGSSSRQSSTAASSSSSANSGA. The segment at 161 to 198 is disordered; the sequence is SSASTSRGSSSRQSSTAASSSSSANSGARPPPTRSQTN.

This sequence belongs to the shisa family. In terms of assembly, interacts with fzd8 and fgfr1.

It localises to the endoplasmic reticulum membrane. Functionally, plays an essential role in the maturation of presomitic mesoderm cells by individual attenuation of both fgf and wnt signaling. Inhibits both wnt and fgf signaling through the regulation of protein maturation and cell surface transportation of their receptors within the endoplasmic reticulum. In Xenopus laevis (African clawed frog), this protein is Protein shisa-2 (shisa2).